We begin with the raw amino-acid sequence, 81 residues long: Photosystem I iron-sulfur center (81 aa).

2 consecutive 4Fe-4S ferredoxin-type domains span residues 1 to 31 (MSHKVKIYDTCIGCTQCVRACPLDVLEMVPW) and 39 to 68 (IASSPRTEDCVGCKRCETACPTDFLSIRVY). Residues Cys-11, Cys-14, Cys-17, Cys-21, Cys-48, Cys-51, Cys-54, and Cys-58 each contribute to the [4Fe-4S] cluster site.

As to quaternary structure, the cyanobacterial PSI reaction center is composed of one copy each of PsaA,B,C,D,E,F,I,J,K,L,M and X, and forms trimeric complexes. The cofactor is [4Fe-4S] cluster.

The protein resides in the cellular thylakoid membrane. It carries out the reaction reduced [plastocyanin] + hnu + oxidized [2Fe-2S]-[ferredoxin] = oxidized [plastocyanin] + reduced [2Fe-2S]-[ferredoxin]. Its function is as follows. Apoprotein for the two 4Fe-4S centers FA and FB of photosystem I (PSI); essential for photochemical activity. FB is the terminal electron acceptor of PSI, donating electrons to ferredoxin. The C-terminus interacts with PsaA/B/D and helps assemble the protein into the PSI complex. Required for binding of PsaD and PsaE to PSI. PSI is a plastocyanin/cytochrome c6-ferredoxin oxidoreductase, converting photonic excitation into a charge separation, which transfers an electron from the donor P700 chlorophyll pair to the spectroscopically characterized acceptors A0, A1, FX, FA and FB in turn. The polypeptide is Photosystem I iron-sulfur center (Rippkaea orientalis (strain PCC 8801 / RF-1) (Cyanothece sp. (strain PCC 8801))).